The following is a 260-amino-acid chain: tRNA pseudouridine synthase C (260 aa).

The active site involves D54.

The protein belongs to the pseudouridine synthase RluA family.

It carries out the reaction uridine(65) in tRNA = pseudouridine(65) in tRNA. Responsible for synthesis of pseudouridine from uracil-65 in transfer RNAs. The chain is tRNA pseudouridine synthase C (truC) from Salmonella typhimurium (strain LT2 / SGSC1412 / ATCC 700720).